The primary structure comprises 105 residues: Large ribosomal subunit protein uL24 (105 aa).

It belongs to the universal ribosomal protein uL24 family. In terms of assembly, part of the 50S ribosomal subunit.

In terms of biological role, one of two assembly initiator proteins, it binds directly to the 5'-end of the 23S rRNA, where it nucleates assembly of the 50S subunit. One of the proteins that surrounds the polypeptide exit tunnel on the outside of the subunit. In Dictyoglomus thermophilum (strain ATCC 35947 / DSM 3960 / H-6-12), this protein is Large ribosomal subunit protein uL24.